The following is a 259-amino-acid chain: MADACCTRTYVIAASTMSVCSSDVGHVSRVSSPSTCTGSSWQVDNCQESCCEPRSCASSCCTPSCCAPAPCLALVCAPVSCEPSPCQSGCTDSCTPSCCQQSSCQPACCTSSPCQQACCVPVCCKSNCCKPVCCVSICSGASSPCCQQSSCQSACCTFSPCQQACCVPICCKPICCVPVCSGASSLCCQKSSCQPACCTTSCCRPSSSVSLLCRPVCRPACCVPVPSCCVPASSCQPSCCHPASCLSFLCRPACSRLAC.

The segment at 26–243 (HVSRVSSPST…SCQPSCCHPA (218 aa)) is 19 X 5 AA repeats of C-C-X(3). Repeat copies occupy residues 50–54 (CCEPR), 60–64 (CCTPS), 65–69 (CCAPA), 98–102 (CCQQS), 108–112 (CCTSS), 118–122 (CCVPV), 123–127 (CCKSN), 133–137 (CCVSI), 145–149 (CCQQS), 155–159 (CCTFS), 165–169 (CCVPI), 170–174 (CCKPI), 175–179 (CCVPV), 187–191 (CCQKS), 197–201 (CCTTS), 202–206 (CCRPS), 221–225 (CCVPV), 228–232 (CCVPA), and 239–243 (CCHPA).

The protein belongs to the KRTAP type 10 family. As to quaternary structure, interacts with hair keratins. Restricted to a narrow region of the hair fiber cuticle, lying approximately 20 cell layers above the apex of the dermal papilla of the hair root; not detected in any other tissues.

Its function is as follows. In the hair cortex, hair keratin intermediate filaments are embedded in an interfilamentous matrix, consisting of hair keratin-associated proteins (KRTAP), which are essential for the formation of a rigid and resistant hair shaft through their extensive disulfide bond cross-linking with abundant cysteine residues of hair keratins. The matrix proteins include the high-sulfur and high-glycine-tyrosine keratins. The polypeptide is Keratin-associated protein 10-8 (KRTAP10-8) (Homo sapiens (Human)).